The primary structure comprises 235 residues: NAD-dependent protein deacylase (235 aa).

Positions 1–235 (MDLRLFKNIV…VPRFITQFLE (235 aa)) constitute a Deacetylase sirtuin-type domain. 14 to 33 (GAGISAESGIRTFRDQDGLW) contributes to the NAD(+) binding site. 2 residues coordinate substrate: tyrosine 58 and arginine 61. 95–98 (QNVD) contributes to the NAD(+) binding site. Histidine 113 (proton acceptor) is an active-site residue. The Zn(2+) site is built by cysteine 121, cysteine 124, cysteine 140, and cysteine 143. Residues 180 to 182 (GTS), 204 to 206 (NLK), and alanine 222 each bind NAD(+).

It belongs to the sirtuin family. Class III subfamily. Requires Zn(2+) as cofactor.

The protein resides in the cytoplasm. The catalysed reaction is N(6)-acetyl-L-lysyl-[protein] + NAD(+) + H2O = 2''-O-acetyl-ADP-D-ribose + nicotinamide + L-lysyl-[protein]. The enzyme catalyses N(6)-succinyl-L-lysyl-[protein] + NAD(+) + H2O = 2''-O-succinyl-ADP-D-ribose + nicotinamide + L-lysyl-[protein]. Functionally, NAD-dependent lysine deacetylase and desuccinylase that specifically removes acetyl and succinyl groups on target proteins. Modulates the activities of several proteins which are inactive in their acylated form. The sequence is that of NAD-dependent protein deacylase from Bdellovibrio bacteriovorus (strain ATCC 15356 / DSM 50701 / NCIMB 9529 / HD100).